Consider the following 219-residue polypeptide: Lipoprotein-releasing system ATP-binding protein LolD (219 aa).

Residues 3–219 (IEARNIRKSF…HMRDGLLFSE (217 aa)) form the ABC transporter domain. 35–42 (GTSGAGKT) serves as a coordination point for ATP.

The protein belongs to the ABC transporter superfamily. Lipoprotein translocase (TC 3.A.1.125) family. As to quaternary structure, the complex is composed of two ATP-binding proteins (LolD) and two transmembrane proteins (LolC and LolE).

The protein resides in the cell inner membrane. Part of the ABC transporter complex LolCDE involved in the translocation of mature outer membrane-directed lipoproteins, from the inner membrane to the periplasmic chaperone, LolA. Responsible for the formation of the LolA-lipoprotein complex in an ATP-dependent manner. This chain is Lipoprotein-releasing system ATP-binding protein LolD, found in Porphyromonas gingivalis (strain ATCC BAA-308 / W83).